The following is a 462-amino-acid chain: tRNA modification GTPase MnmE (462 aa).

Residues R23, E88, and R127 each contribute to the (6S)-5-formyl-5,6,7,8-tetrahydrofolate site. Residues 224–383 (GLATVIIGRP…LEKAIADLFF (160 aa)) enclose the TrmE-type G domain. N234 contacts K(+). Residues 234–239 (NVGKSS), 253–259 (TDIPGTT), and 278–281 (DTAG) contribute to the GTP site. S238 contacts Mg(2+). 3 residues coordinate K(+): T253, I255, and T258. T259 provides a ligand contact to Mg(2+). Residue K462 coordinates (6S)-5-formyl-5,6,7,8-tetrahydrofolate.

The protein belongs to the TRAFAC class TrmE-Era-EngA-EngB-Septin-like GTPase superfamily. TrmE GTPase family. As to quaternary structure, homodimer. Heterotetramer of two MnmE and two MnmG subunits. The cofactor is K(+).

It is found in the cytoplasm. Functionally, exhibits a very high intrinsic GTPase hydrolysis rate. Involved in the addition of a carboxymethylaminomethyl (cmnm) group at the wobble position (U34) of certain tRNAs, forming tRNA-cmnm(5)s(2)U34. This chain is tRNA modification GTPase MnmE, found in Geobacillus thermodenitrificans (strain NG80-2).